Here is a 371-residue protein sequence, read N- to C-terminus: tRNA-specific 2-thiouridylase MnmA (371 aa).

ATP-binding positions include 22-29 (GLSGGVDS) and Met-48. The interaction with target base in tRNA stretch occupies residues 108–110 (NPD). Cys-113 functions as the Nucleophile in the catalytic mechanism. A disulfide bridge links Cys-113 with Cys-209. Gly-137 provides a ligand contact to ATP. Residues 159–161 (KDQ) form an interaction with tRNA region. The Cysteine persulfide intermediate role is filled by Cys-209.

It belongs to the MnmA/TRMU family.

It localises to the cytoplasm. The catalysed reaction is S-sulfanyl-L-cysteinyl-[protein] + uridine(34) in tRNA + AH2 + ATP = 2-thiouridine(34) in tRNA + L-cysteinyl-[protein] + A + AMP + diphosphate + H(+). In terms of biological role, catalyzes the 2-thiolation of uridine at the wobble position (U34) of tRNA, leading to the formation of s(2)U34. The chain is tRNA-specific 2-thiouridylase MnmA from Coxiella burnetii (strain CbuK_Q154) (Coxiella burnetii (strain Q154)).